Reading from the N-terminus, the 622-residue chain is FERM domain-containing protein 6 (622 aa).

The 313-residue stretch at 16-328 (RSVCIFLPND…NSHRLYMNLQ (313 aa)) folds into the FERM domain. The segment at 364 to 445 (KRSRASGSSA…SGVESGGKDR (82 aa)) is disordered. Low complexity-rich tracts occupy residues 384–395 (HSTASHSSSHTS) and 425–438 (SSMTSHGSSHTSGV). Serine 522 is modified (phosphoserine). Threonine 523 carries the phosphothreonine modification. Phosphoserine is present on residues serine 525, serine 542, and serine 544.

It is found in the cytoplasm. It localises to the cell membrane. The chain is FERM domain-containing protein 6 (FRMD6) from Homo sapiens (Human).